Reading from the N-terminus, the 289-residue chain is Probable endonuclease 4 (289 aa).

9 residues coordinate Zn(2+): histidine 75, histidine 115, glutamate 153, aspartate 187, histidine 190, histidine 224, aspartate 237, histidine 239, and glutamate 269.

This sequence belongs to the AP endonuclease 2 family. Zn(2+) is required as a cofactor.

The catalysed reaction is Endonucleolytic cleavage to 5'-phosphooligonucleotide end-products.. Functionally, endonuclease IV plays a role in DNA repair. It cleaves phosphodiester bonds at apurinic or apyrimidinic (AP) sites, generating a 3'-hydroxyl group and a 5'-terminal sugar phosphate. This is Probable endonuclease 4 from Chlamydia caviae (strain ATCC VR-813 / DSM 19441 / 03DC25 / GPIC) (Chlamydophila caviae).